Reading from the N-terminus, the 310-residue chain is HTH-type transcriptional activator TtdR (310 aa).

Residues 6–63 (PLAKDLQVLVEIVHSGSFSAAAATLGQTPAFVTKRIQILENTLATTLLNRSARGVALT) enclose the HTH lysR-type domain. Positions 23 to 42 (FSAAAATLGQTPAFVTKRIQ) form a DNA-binding region, H-T-H motif.

This sequence belongs to the LysR transcriptional regulatory family.

Its function is as follows. Positive regulator required for L-tartrate-dependent anaerobic growth on glycerol. Induces expression of the ttdA-ttdB-ygjE operon. This is HTH-type transcriptional activator TtdR (ttdR) from Escherichia coli (strain K12).